A 908-amino-acid polypeptide reads, in one-letter code: Auxin response factor 6 (908 aa).

The segment at 1-21 (MKLSPSAGGVSDQPPSPPEVA) is disordered. Positions 134–236 (FCKTLTASDT…QLLLGIRRAN (103 aa)) form a DNA-binding region, TF-B3. A disordered region spans residues 525–556 (NEQKPQLQPQQQQQESHQQQPQHQQMQQQKHL). Residues 526 to 556 (EQKPQLQPQQQQQESHQQQPQHQQMQQQKHL) show a composition bias toward low complexity. Positions 777–861 (ATFVKVYKSG…SCIKILSPQE (85 aa)) constitute a PB1 domain.

It belongs to the ARF family. Homodimers and heterodimers.

It is found in the nucleus. Functionally, auxin response factors (ARFs) are transcriptional factors that bind specifically to the DNA sequence 5'-TGTCTC-3' found in the auxin-responsive promoter elements (AuxREs). The polypeptide is Auxin response factor 6 (ARF6) (Oryza sativa subsp. indica (Rice)).